The following is a 72-amino-acid chain: SRY-related protein AES2 (72 aa).

The HMG box DNA-binding region spans 1–69 (VKRPMNAFMV…KHMADYPDYK (69 aa)).

It is found in the nucleus. In Alligator mississippiensis (American alligator), this protein is SRY-related protein AES2.